A 232-amino-acid chain; its full sequence is Large ribosomal subunit protein uL1 (232 aa).

It belongs to the universal ribosomal protein uL1 family. In terms of assembly, part of the 50S ribosomal subunit.

In terms of biological role, binds directly to 23S rRNA. The L1 stalk is quite mobile in the ribosome, and is involved in E site tRNA release. Its function is as follows. Protein L1 is also a translational repressor protein, it controls the translation of the L11 operon by binding to its mRNA. The sequence is that of Large ribosomal subunit protein uL1 from Chelativorans sp. (strain BNC1).